The chain runs to 218 residues: LOB domain-containing protein 29 (218 aa).

Residues 10–112 (SPCGACKFLR…AELEILKQQA (103 aa)) enclose the LOB domain.

Belongs to the LOB domain-containing protein family. Expressed in roots.

Its function is as follows. Involved in lateral root formation. Regulated by the transcriptional activators ARF7 and ARF19. This is LOB domain-containing protein 29 (LBD29) from Arabidopsis thaliana (Mouse-ear cress).